The chain runs to 490 residues: Betaine aldehyde dehydrogenase (490 aa).

K(+) is bound by residues Ile-27 and Asp-93. 150-152 (GAW) contacts NAD(+). The Charge relay system role is filled by Lys-162. Residue 176–179 (KPSE) coordinates NAD(+). K(+) is bound at residue Val-180. NAD(+) is bound at residue 230 to 233 (GTTT). Leu-246 is a binding site for K(+). Residue Glu-252 is the Proton acceptor of the active site. NAD(+) contacts are provided by Gly-254, Cys-286, and Glu-387. The active-site Nucleophile is the Cys-286. Cys-286 carries the cysteine sulfenic acid (-SOH) modification. Positions 457 and 460 each coordinate K(+). Glu-464 functions as the Charge relay system in the catalytic mechanism.

It belongs to the aldehyde dehydrogenase family. Dimer of dimers. The cofactor is K(+).

The enzyme catalyses betaine aldehyde + NAD(+) + H2O = glycine betaine + NADH + 2 H(+). It participates in amine and polyamine biosynthesis; betaine biosynthesis via choline pathway; betaine from betaine aldehyde: step 1/1. In terms of biological role, involved in the biosynthesis of the osmoprotectant glycine betaine. Catalyzes the irreversible oxidation of betaine aldehyde to the corresponding acid. This chain is Betaine aldehyde dehydrogenase, found in Pseudomonas putida (strain ATCC 700007 / DSM 6899 / JCM 31910 / BCRC 17059 / LMG 24140 / F1).